The primary structure comprises 1773 residues: Disco-interacting protein 2 (1773 aa).

One can recognise a DMAP1-binding domain in the interval 3-110; sequence HTASLPGYVR…QRHSKKIDFH (108 aa). Residues Y60 and Y61 each carry the phosphotyrosine modification. Disordered stretches follow at residues 112–185 and 198–319; these read QAAM…YHSE and LKGR…PLSS. Composition is skewed to polar residues over residues 113–125 and 146–165; these read AAMS…QSGN and YQNT…NNSQ. A compositionally biased stretch (basic residues) spans 166 to 175; sequence HRQRRTQRKV. Over residues 176-185 the composition is skewed to basic and acidic residues; that stretch reads THNEKRYHSE. A compositionally biased stretch (acidic residues) spans 224–236; the sequence is DELDSSTDDESIP. The span at 241–253 shows a compositional bias: basic and acidic residues; it reads SPDKEYNYPRDHI. Positions 272–297 are enriched in polar residues; the sequence is SMGSQQHARTDVKQNQITNQKYTAPN.

Belongs to the DIP2 family. In terms of assembly, interacts with Disco. As to expression, expressed in the developing nervous system. Ubiquitously expressed in the developing brain. Within the mushroom body, a higher level is detected in the core of lobes and peduncle in the late third instar larva. Detected in whole mushroom body neuron structures at 48 hours after puparium formation and during later stages.

The protein localises to the cell membrane. Functionally, required for precise axonal bifurcation in mushroom body neurons by suppressing ectopic bifurcation and regulating the guidance of sister axons. May function by regulating expression of tdp1. Acts downstream of the serine/threonine-protein kinase Bsk to modulate the direction of axon projection. May play a role in fatty acid metabolism. This Drosophila melanogaster (Fruit fly) protein is Disco-interacting protein 2.